Consider the following 484-residue polypeptide: Pheophytinase, chloroplastic (484 aa).

The transit peptide at 1–47 (MEIISLNVVPQCSVVTWSSKLATKRLVPNRSSLLFSGVKKSRLVIRS) directs the protein to the chloroplast.

Belongs to the AB hydrolase superfamily. In terms of assembly, interacts with HCAR, RCCR, PAO and the LHCII complex. Part of a SGR1-CCE-LHCII complex, which acts in chlorophyll breakdown.

It localises to the plastid. Its subcellular location is the chloroplast thylakoid membrane. The protein resides in the chloroplast stroma. Functionally, alpha/beta hydrolase dephytylating specifically the Mg-free chlorophyll pigment (pheophytin), yielding pheophorbide. No activity on chlorophyll. Belongs to the chlorophyll catabolic enzymes (CCEs). The sequence is that of Pheophytinase, chloroplastic (PPH) from Arabidopsis thaliana (Mouse-ear cress).